Here is a 368-residue protein sequence, read N- to C-terminus: F-box only protein 28 (368 aa).

A compositionally biased stretch (basic and acidic residues) spans 1–11 (MAAAAEERMAE). The tract at residues 1–56 (MAAAAEERMAEEGGGGQGDGGSSLASGSTQRQPPPPAPQHPQPGSQALPAPALAPD) is disordered. A compositionally biased stretch (gly residues) spans 12–21 (EGGGGQGDGG). The span at 22–31 (SSLASGSTQR) shows a compositional bias: low complexity. Over residues 32-41 (QPPPPAPQHP) the composition is skewed to pro residues. Residues 42–56 (QPGSQALPAPALAPD) are compositionally biased toward low complexity. Positions 61 to 109 (NNTLVALPIVAIENILSFMSYDEISQLRLVCKRMDLVCQRMLNQGFLKV) constitute an F-box domain. 2 positions are modified to phosphoserine: Ser235 and Ser242. Phosphothreonine is present on Thr270. Positions 328-368 (MESAVGNSSGSGQNEESPRKRKKATEAIDSLRKSKRLRNRK) are disordered. Over residues 333–342 (GNSSGSGQNE) the composition is skewed to low complexity. Position 344 is a phosphoserine (Ser344).

In terms of assembly, part of a SCF (SKP1-cullin-F-box) protein ligase complex.

Its subcellular location is the chromosome. The protein localises to the centromere. The protein resides in the kinetochore. Probably recognizes and binds to some phosphorylated proteins and promotes their ubiquitination and degradation. The chain is F-box only protein 28 (FBXO28) from Homo sapiens (Human).